A 710-amino-acid chain; its full sequence is Chloride channel protein CLC-e (710 aa).

12 helical membrane passes run 74–94 (ELAI…VVLF), 122–142 (IGSN…VVSI), 164–184 (VKAV…LGTG), 193–213 (SVEI…KSPQ), 222–242 (GSAA…FFAV), 261–281 (TTSM…IGLG), 296–316 (PGEL…SLAL), 340–360 (VFPV…PEVL), 379–399 (GLSA…TAWC), 412–432 (SLFI…LALA), 451–471 (GLVG…TAVL), and 472–492 (LLFE…AVGM). A disordered region spans residues 500-534 (QSKRQETRETKETRKRKSQEAVQSLTSSDDESSTN). The segment covering 502 to 511 (KRQETRETKE) has biased composition (basic and acidic residues). A compositionally biased stretch (polar residues) spans 520–534 (AVQSLTSSDDESSTN). 2 CBS domains span residues 565–624 (MRTR…GNNR) and 640–702 (KCKV…ATRM). A helical membrane pass occupies residues 667 to 687 (HVAVVSGSIDAPRIHPVGVLD).

The protein belongs to the chloride channel (TC 2.A.49) family. Homodimer.

Its subcellular location is the membrane. The catalysed reaction is 2 chloride(in) + H(+)(out) = 2 chloride(out) + H(+)(in). Voltage-gated thylakoid chloride (Cl) channel/transporter involved in chloride homeostasis after transition from light to dark. Influences chloroplast ultrastructure and subsequent photosynthetic electron transport. During photosynthetic response on transition from dark to low light, involved in a sequential mechanism of adaptation; VCCN1 and CLCe first trigger the activation of photoprotection, which is later down-regulated by KEA3 to a low steady state, while adjusting electron transport. Regulates photosynthesis by a pH-independent mechanism likely involving Cl(-) homeostasis. The sequence is that of Chloride channel protein CLC-e from Arabidopsis thaliana (Mouse-ear cress).